The sequence spans 226 residues: Thymidylate kinase (226 aa).

16–23 (GIDGAGKT) serves as a coordination point for ATP.

This sequence belongs to the thymidylate kinase family.

The catalysed reaction is dTMP + ATP = dTDP + ADP. Its function is as follows. Phosphorylation of dTMP to form dTDP in both de novo and salvage pathways of dTTP synthesis. This Xanthomonas euvesicatoria pv. vesicatoria (strain 85-10) (Xanthomonas campestris pv. vesicatoria) protein is Thymidylate kinase.